The following is a 290-amino-acid chain: Protein-lysine methyltransferase METTL21E (290 aa).

Residues Trp96, 124-126, Asp145, Trp176, and Ala197 each bind S-adenosyl-L-methionine; that span reads GAG.

This sequence belongs to the methyltransferase superfamily. METTL21 family.

Protein-lysine methyltransferase. In Bos taurus (Bovine), this protein is Protein-lysine methyltransferase METTL21E (METTL21E).